A 230-amino-acid polypeptide reads, in one-letter code: Cytidylate kinase (230 aa).

Residue 16–24 (GPASAGKST) participates in ATP binding.

This sequence belongs to the cytidylate kinase family. Type 1 subfamily.

The protein localises to the cytoplasm. The enzyme catalyses CMP + ATP = CDP + ADP. The catalysed reaction is dCMP + ATP = dCDP + ADP. The chain is Cytidylate kinase from Lactobacillus johnsonii (strain CNCM I-12250 / La1 / NCC 533).